The chain runs to 258 residues: RBPJ-interacting and tubulin-associated protein 1 (258 aa).

Disordered stretches follow at residues 28-86 (FGSP…PRKK), 132-182 (TPPA…APRS), and 195-258 (AVPS…PPWK). Residues 71-81 (SPSSRGSTPNL) show a composition bias toward polar residues. The Nuclear localization signal signature appears at 81 to 97 (LTPRKKNKYRLIGHTPS). The interval 117–145 (RTAVEDAAKLRTLFWTPPATPRGSHSPRP) is interaction with RBPJ/RBPSUH. The interval 145-258 (PRETPLRAIH…CPQKPKPPWK (114 aa)) is interaction with tubulin. Composition is skewed to polar residues over residues 201–212 (HPASTAPQTNGP) and 236–245 (GSVSGPTTPQ).

This sequence belongs to the RITA family. In terms of assembly, interacts with RBPJ/RBPSUH.

It is found in the cytoplasm. The protein localises to the nucleus. It localises to the cytoskeleton. The protein resides in the microtubule organizing center. Its subcellular location is the centrosome. Tubulin-binding protein that acts as a negative regulator of Notch signaling pathway. Shuttles between the cytoplasm and the nucleus and mediates the nuclear export of RBPJ/RBPSUH, thereby preventing the interaction between RBPJ/RBPSUH and NICD product of Notch proteins (Notch intracellular domain), leading to down-regulate Notch-mediated transcription. May play a role in neurogenesis. The sequence is that of RBPJ-interacting and tubulin-associated protein 1 (Rita1) from Rattus norvegicus (Rat).